Here is a 278-residue protein sequence, read N- to C-terminus: Octanoyl-[GcvH]:protein N-octanoyltransferase (278 aa).

The region spanning Leu-41–His-247 is the BPL/LPL catalytic domain. The Acyl-thioester intermediate role is filled by Cys-146.

It belongs to the octanoyltransferase LipL family.

It catalyses the reaction N(6)-octanoyl-L-lysyl-[glycine-cleavage complex H protein] + L-lysyl-[lipoyl-carrier protein] = N(6)-octanoyl-L-lysyl-[lipoyl-carrier protein] + L-lysyl-[glycine-cleavage complex H protein]. It functions in the pathway protein modification; protein lipoylation via endogenous pathway; protein N(6)-(lipoyl)lysine from octanoyl-[acyl-carrier-protein]. In terms of biological role, catalyzes the amidotransfer (transamidation) of the octanoyl moiety from octanoyl-GcvH to the lipoyl domain of the E2 subunit of lipoate-dependent enzymes. This is Octanoyl-[GcvH]:protein N-octanoyltransferase from Lysinibacillus sphaericus (strain C3-41).